A 302-amino-acid chain; its full sequence is 4-hydroxy-tetrahydrodipicolinate synthase (302 aa).

Threonine 55 provides a ligand contact to pyruvate. Tyrosine 144 functions as the Proton donor/acceptor in the catalytic mechanism. The active-site Schiff-base intermediate with substrate is the lysine 172. Valine 214 provides a ligand contact to pyruvate.

The protein belongs to the DapA family. As to quaternary structure, homotetramer; dimer of dimers.

Its subcellular location is the cytoplasm. It catalyses the reaction L-aspartate 4-semialdehyde + pyruvate = (2S,4S)-4-hydroxy-2,3,4,5-tetrahydrodipicolinate + H2O + H(+). Its pathway is amino-acid biosynthesis; L-lysine biosynthesis via DAP pathway; (S)-tetrahydrodipicolinate from L-aspartate: step 3/4. Its function is as follows. Catalyzes the condensation of (S)-aspartate-beta-semialdehyde [(S)-ASA] and pyruvate to 4-hydroxy-tetrahydrodipicolinate (HTPA). This chain is 4-hydroxy-tetrahydrodipicolinate synthase, found in Parasynechococcus marenigrum (strain WH8102).